The following is a 321-amino-acid chain: Lipoyl synthase (321 aa).

7 residues coordinate [4Fe-4S] cluster: cysteine 68, cysteine 73, cysteine 79, cysteine 94, cysteine 98, cysteine 101, and serine 308. Positions 80–297 (FNHGTATFMI…KVLADELGFT (218 aa)) constitute a Radical SAM core domain.

The protein belongs to the radical SAM superfamily. Lipoyl synthase family. [4Fe-4S] cluster is required as a cofactor.

The protein resides in the cytoplasm. It catalyses the reaction [[Fe-S] cluster scaffold protein carrying a second [4Fe-4S](2+) cluster] + N(6)-octanoyl-L-lysyl-[protein] + 2 oxidized [2Fe-2S]-[ferredoxin] + 2 S-adenosyl-L-methionine + 4 H(+) = [[Fe-S] cluster scaffold protein] + N(6)-[(R)-dihydrolipoyl]-L-lysyl-[protein] + 4 Fe(3+) + 2 hydrogen sulfide + 2 5'-deoxyadenosine + 2 L-methionine + 2 reduced [2Fe-2S]-[ferredoxin]. It participates in protein modification; protein lipoylation via endogenous pathway; protein N(6)-(lipoyl)lysine from octanoyl-[acyl-carrier-protein]: step 2/2. In terms of biological role, catalyzes the radical-mediated insertion of two sulfur atoms into the C-6 and C-8 positions of the octanoyl moiety bound to the lipoyl domains of lipoate-dependent enzymes, thereby converting the octanoylated domains into lipoylated derivatives. This is Lipoyl synthase from Shewanella denitrificans (strain OS217 / ATCC BAA-1090 / DSM 15013).